The following is a 249-amino-acid chain: Enolase-phosphatase E1 (249 aa).

Positions 14 and 16 each coordinate Mg(2+). Substrate is bound by residues 141–142 (SS) and Lys175. Residue Asp200 coordinates Mg(2+).

This sequence belongs to the HAD-like hydrolase superfamily. MasA/MtnC family. In terms of assembly, monomer. Mg(2+) serves as cofactor.

The protein localises to the cytoplasm. It is found in the nucleus. The enzyme catalyses 5-methylsulfanyl-2,3-dioxopentyl phosphate + H2O = 1,2-dihydroxy-5-(methylsulfanyl)pent-1-en-3-one + phosphate. Its pathway is amino-acid biosynthesis; L-methionine biosynthesis via salvage pathway; L-methionine from S-methyl-5-thio-alpha-D-ribose 1-phosphate: step 3/6. It functions in the pathway amino-acid biosynthesis; L-methionine biosynthesis via salvage pathway; L-methionine from S-methyl-5-thio-alpha-D-ribose 1-phosphate: step 4/6. In terms of biological role, bifunctional enzyme that catalyzes the enolization of 2,3-diketo-5-methylthiopentyl-1-phosphate (DK-MTP-1-P) into the intermediate 2-hydroxy-3-keto-5-methylthiopentenyl-1-phosphate (HK-MTPenyl-1-P), which is then dephosphorylated to form the acireductone 1,2-dihydroxy-3-keto-5-methylthiopentene (DHK-MTPene). The chain is Enolase-phosphatase E1 from Drosophila virilis (Fruit fly).